The chain runs to 298 residues: Fluorinase (298 aa).

S-adenosyl-L-methionine is bound by residues Asp14, 19–21, Tyr75, Ser156, Asp209, Asn214, 268–269, and 276–278; these read DDS, SR, and RNA.

It belongs to the SAM hydrolase / SAM-dependent halogenase family.

The catalysed reaction is fluoride + S-adenosyl-L-methionine = 5'-deoxy-5'-fluoroadenosine + L-methionine. Its function is as follows. Catalyzes the formation of a C-F bond by combining S-adenosyl-L-methionine (SAM) and fluoride to generate 5'-fluoro-5'-deoxyadenosine (5'-FDA) and L-methionine. The polypeptide is Fluorinase (Actinoplanes sp. (strain N902-109)).